A 344-amino-acid chain; its full sequence is tRNA N6-adenosine threonylcarbamoyltransferase (344 aa).

2 residues coordinate Fe cation: His111 and His115. Residues 134 to 138 (LVSGG), Asp167, Gly180, and Asn273 each bind substrate. Asp301 provides a ligand contact to Fe cation.

It belongs to the KAE1 / TsaD family. It depends on Fe(2+) as a cofactor.

It is found in the cytoplasm. The catalysed reaction is L-threonylcarbamoyladenylate + adenosine(37) in tRNA = N(6)-L-threonylcarbamoyladenosine(37) in tRNA + AMP + H(+). Functionally, required for the formation of a threonylcarbamoyl group on adenosine at position 37 (t(6)A37) in tRNAs that read codons beginning with adenine. Is involved in the transfer of the threonylcarbamoyl moiety of threonylcarbamoyl-AMP (TC-AMP) to the N6 group of A37, together with TsaE and TsaB. TsaD likely plays a direct catalytic role in this reaction. This is tRNA N6-adenosine threonylcarbamoyltransferase from Cupriavidus taiwanensis (strain DSM 17343 / BCRC 17206 / CCUG 44338 / CIP 107171 / LMG 19424 / R1) (Ralstonia taiwanensis (strain LMG 19424)).